Consider the following 93-residue polypeptide: Mitochondrial import inner membrane translocase subunit Tim10-A (93 aa).

A Twin CX3C motif motif is present at residues 32 to 57; sequence CHKKCVPPHYKEAELSKGESVCLDRC. Cystine bridges form between C32–C57 and C36–C53.

This sequence belongs to the small Tim family. Heterohexamer; composed of 3 copies of TIMM9 and 3 copies of TIMM10/TIM10A, named soluble 70 kDa complex. The complex forms a 6-bladed alpha-propeller structure and associates with the TIMM22 component of the TIM22 complex. Interacts with multi-pass transmembrane proteins in transit.

Its subcellular location is the mitochondrion inner membrane. Functionally, mitochondrial intermembrane chaperone that participates in the import and insertion of multi-pass transmembrane proteins into the mitochondrial inner membrane. May also be required for the transfer of beta-barrel precursors from the TOM complex to the sorting and assembly machinery (SAM complex) of the outer membrane. Acts as a chaperone-like protein that protects the hydrophobic precursors from aggregation and guide them through the mitochondrial intermembrane space. In Xenopus laevis (African clawed frog), this protein is Mitochondrial import inner membrane translocase subunit Tim10-A (timm10-a).